Reading from the N-terminus, the 484-residue chain is Protein nucleotidyltransferase YdiU (484 aa).

ATP contacts are provided by G81, G83, R84, K103, D115, G116, R166, and R173. Catalysis depends on D244, which acts as the Proton acceptor. Residues N245 and D254 each coordinate Mg(2+). An ATP-binding site is contributed by D254.

This sequence belongs to the SELO family. Mg(2+) serves as cofactor. The cofactor is Mn(2+).

It catalyses the reaction L-seryl-[protein] + ATP = 3-O-(5'-adenylyl)-L-seryl-[protein] + diphosphate. The catalysed reaction is L-threonyl-[protein] + ATP = 3-O-(5'-adenylyl)-L-threonyl-[protein] + diphosphate. It carries out the reaction L-tyrosyl-[protein] + ATP = O-(5'-adenylyl)-L-tyrosyl-[protein] + diphosphate. The enzyme catalyses L-histidyl-[protein] + UTP = N(tele)-(5'-uridylyl)-L-histidyl-[protein] + diphosphate. It catalyses the reaction L-seryl-[protein] + UTP = O-(5'-uridylyl)-L-seryl-[protein] + diphosphate. The catalysed reaction is L-tyrosyl-[protein] + UTP = O-(5'-uridylyl)-L-tyrosyl-[protein] + diphosphate. Nucleotidyltransferase involved in the post-translational modification of proteins. It can catalyze the addition of adenosine monophosphate (AMP) or uridine monophosphate (UMP) to a protein, resulting in modifications known as AMPylation and UMPylation. This Shewanella sp. (strain MR-4) protein is Protein nucleotidyltransferase YdiU.